An 88-amino-acid polypeptide reads, in one-letter code: Bombyxin B-8 (88 aa).

The first 18 residues, 1–18 (MKTSVIFVLIVLNLMWSG), serve as a signal peptide directing secretion. 3 disulfide bridges follow: C28–C74, C40–C87, and C73–C78. The propeptide at 47-65 (GGAQYAPYFWQKAYLGSRG) is c peptide like.

The protein belongs to the insulin family. Heterodimer of a B chain and an A chain linked by two disulfide bonds.

Its subcellular location is the secreted. In terms of biological role, brain peptide responsible for activation of prothoracic glands to produce ecdysone in insects. The protein is Bombyxin B-8 (BBXB8) of Bombyx mori (Silk moth).